Reading from the N-terminus, the 172-residue chain is RNA pyrophosphohydrolase (172 aa).

The region spanning 6-149 (GFRANVGIII…KRDVYRKVMK (144 aa)) is the Nudix hydrolase domain. The Nudix box motif lies at 38–59 (GGLDDGESAEEAMYRELYEEVG).

The protein belongs to the Nudix hydrolase family. RppH subfamily. A divalent metal cation is required as a cofactor.

In terms of biological role, accelerates the degradation of transcripts by removing pyrophosphate from the 5'-end of triphosphorylated RNA, leading to a more labile monophosphorylated state that can stimulate subsequent ribonuclease cleavage. This chain is RNA pyrophosphohydrolase, found in Shewanella denitrificans (strain OS217 / ATCC BAA-1090 / DSM 15013).